Consider the following 227-residue polypeptide: Lipoprotein-releasing system ATP-binding protein LolD (227 aa).

The region spanning 7 to 227 (LSCRDLGKSY…HLQEGHLVAI (221 aa)) is the ABC transporter domain. 43–50 (GTSGSGKS) contributes to the ATP binding site.

Belongs to the ABC transporter superfamily. Lipoprotein translocase (TC 3.A.1.125) family. In terms of assembly, the complex is composed of two ATP-binding proteins (LolD) and two transmembrane proteins (LolC and LolE).

The protein resides in the cell inner membrane. Part of the ABC transporter complex LolCDE involved in the translocation of mature outer membrane-directed lipoproteins, from the inner membrane to the periplasmic chaperone, LolA. Responsible for the formation of the LolA-lipoprotein complex in an ATP-dependent manner. The sequence is that of Lipoprotein-releasing system ATP-binding protein LolD from Pseudomonas fluorescens (strain ATCC BAA-477 / NRRL B-23932 / Pf-5).